The following is a 41-amino-acid chain: Peroxidase 3 (41 aa).

It belongs to the peroxidase family. Classical plant (class III) peroxidase subfamily. Heme b is required as a cofactor. Ca(2+) serves as cofactor.

Its subcellular location is the secreted. The enzyme catalyses 2 a phenolic donor + H2O2 = 2 a phenolic radical donor + 2 H2O. Its function is as follows. Removal of H(2)O(2), oxidation of toxic reductants, biosynthesis and degradation of lignin, suberization, auxin catabolism, response to environmental stresses such as wounding, pathogen attack and oxidative stress. These functions might be dependent on each isozyme/isoform in each plant tissue. In Vitis vinifera (Grape), this protein is Peroxidase 3.